A 1828-amino-acid chain; its full sequence is Unconventional myosin-Va (1828 aa).

The residue at position 2 (alanine 2) is an N-acetylalanine. Positions threonine 8 to proline 60 constitute a Myosin N-terminal SH3-like domain. Residues valine 69–alanine 763 form the Myosin motor domain. Glycine 163 to threonine 170 provides a ligand contact to ATP. Residues isoleucine 599–lysine 633 are disordered. Serine 600 is modified (phosphoserine). Over residues serine 600–threonine 610 the composition is skewed to polar residues. Residues leucine 643–aspartate 665 are actin-binding. IQ domains follow at residues leucine 766–cysteine 788, methionine 789–arginine 813, arginine 814–isoleucine 836, arginine 837–leucine 861, arginine 862–arginine 884, and threonine 885–serine 914. Coiled coils occupy residues serine 914–alanine 1239 and glycine 1314–valine 1418. Residue threonine 1032 is modified to Phosphothreonine. The disordered stretch occupies residues valine 1105 to lysine 1147. The span at threonine 1116–phenylalanine 1130 shows a compositional bias: polar residues. Residues isoleucine 1136–lysine 1147 are compositionally biased toward basic and acidic residues. Residues serine 1425 and serine 1625 each carry the phosphoserine modification. Residues threonine 1507–aspartate 1783 enclose the Dilute domain. Threonine 1733 carries the post-translational modification Phosphothreonine.

Belongs to the TRAFAC class myosin-kinesin ATPase superfamily. Myosin family. In terms of assembly, may be a homodimer, which associates with multiple calmodulin or myosin light chains. Interacts with RIPL2, the interaction is required for its role in dendrite formation. Interacts with MLPH. Interacts with SYTL4. Interacts with MYRIP. Interacts with RAB10; mediates the transport to the plasma membrane of SLC2A4/GLUT4 storage vesicles. Interacts with FMR1; this interaction occurs in association with polyribosome.

It catalyses the reaction ATP + H2O = ADP + phosphate + H(+). Functionally, processive actin-based motor that can move in large steps approximating the 36-nm pseudo-repeat of the actin filament. Can hydrolyze ATP in the presence of actin, which is essential for its function as a motor protein. Involved in melanosome transport. Also mediates the transport of vesicles to the plasma membrane. May also be required for some polarization process involved in dendrite formation. The sequence is that of Unconventional myosin-Va (Myo5a) from Rattus norvegicus (Rat).